The sequence spans 348 residues: Methylthioribose-1-phosphate isomerase (348 aa).

Substrate is bound by residues arginine 54 to alanine 56, arginine 96, and glutamine 199. Residue aspartate 240 is the Proton donor of the active site. Asparagine 250–lysine 251 lines the substrate pocket.

The protein belongs to the eIF-2B alpha/beta/delta subunits family. MtnA subfamily.

The catalysed reaction is 5-(methylsulfanyl)-alpha-D-ribose 1-phosphate = 5-(methylsulfanyl)-D-ribulose 1-phosphate. It participates in amino-acid biosynthesis; L-methionine biosynthesis via salvage pathway; L-methionine from S-methyl-5-thio-alpha-D-ribose 1-phosphate: step 1/6. Its function is as follows. Catalyzes the interconversion of methylthioribose-1-phosphate (MTR-1-P) into methylthioribulose-1-phosphate (MTRu-1-P). The sequence is that of Methylthioribose-1-phosphate isomerase from Thioalkalivibrio sulfidiphilus (strain HL-EbGR7).